A 388-amino-acid chain; its full sequence is Succinyl-diaminopimelate desuccinylase (388 aa).

His84 is a Zn(2+) binding site. Asp86 is an active-site residue. Asp115 serves as a coordination point for Zn(2+). Glu146 functions as the Proton acceptor in the catalytic mechanism. Zn(2+) contacts are provided by Glu147, Glu175, and His360.

Belongs to the peptidase M20A family. DapE subfamily. In terms of assembly, homodimer. The cofactor is Zn(2+). Requires Co(2+) as cofactor.

The enzyme catalyses N-succinyl-(2S,6S)-2,6-diaminopimelate + H2O = (2S,6S)-2,6-diaminopimelate + succinate. The protein operates within amino-acid biosynthesis; L-lysine biosynthesis via DAP pathway; LL-2,6-diaminopimelate from (S)-tetrahydrodipicolinate (succinylase route): step 3/3. In terms of biological role, catalyzes the hydrolysis of N-succinyl-L,L-diaminopimelic acid (SDAP), forming succinate and LL-2,6-diaminopimelate (DAP), an intermediate involved in the bacterial biosynthesis of lysine and meso-diaminopimelic acid, an essential component of bacterial cell walls. This chain is Succinyl-diaminopimelate desuccinylase, found in Helicobacter pylori (strain G27).